Reading from the N-terminus, the 1545-residue chain is MSGLIEKVSILRNDSIHVGYNMSSHIVDEILTKKASSTYVLITDSNIVKMGHLQTFVDEFNRLIPSKRPGSRILTYVVPPGEANKNRATKAAIEDYLLEKGCTRDTFILAIGGGVIGDMIGYVAATFMRGVRFVQIPTSLLAMVDSSIGGKTAIDTPLGKNFIGAFWQPDYVFVDVAFLETLPEREFINGMAEVVKTAAIWNEQEFSRLETYSKRFLKVIRDRRVDDSVDLTSLKEHIIKLVLESIKVKAEVVTLDEREGGLRNLLNFGHSIGHAIEAILTPQALHGECVSIGAVLEAELSRYLGILSPVAVSRLYKCFAAYGLPVSIADKLVQKRTNGKKCPVDVLLQKMAIDKKNDGSKKKVVLLSKIGKCYEPKASYVNDEDLRFVLTDEVLVKDFNSAPSTAVVVPPGSKSISNRALILAALGKGECKIKNLLHSDDTEHMLNAVAALKGADISFDDNGETVVVTGNGGNFTATDAEIYLGNAGTASRFLTSVASIVKPDSNTTHVILTGNARMQERPIGPLVDALRTNGSDIEYLNREGSLPLKIKSGNGLKGGRIELAATISSQYVSSVLMCAPYASEPVTLSLVGGKPISLLYVDMTIAMMKSFGIEVTKSTTEPYTYHVPQGHYVNPAEYVIESDASSATYPLAFAAMNGTQVTIPNIGSSSLQGDARFAVDVLKPMGCKVEQTATSTTVQGPTKGTLKPLPLVDMEPMTDAFLTASVVAAIANDTNQSTSIVGISNQRVKECNRIEAMITQLAKFGVRAKELEDGIEVFGIDYHHLKTPSDGVYTYDDHRVAMSLSLLAGLAESPVLIQERHCTGKTWPGWWDILHTTFNVELDGHEAVVETTTAKANEDKSIIVIGMRAAGKSTLSHVIAQTLKGFKVVDLDDVFVEKYGDIREFIKENSWELFREKEAMIAKEAFKNYSKNTVISTGGGIVETEASRKLLKQQMKDGHIVLHLHRDIEETVVFLSQDKTRPAYVDEINQVWERRKNLYKECSNYFFFSPHCQTEREFFTLKKTFSKFINRITGGAVPSIPNGRSAFVCLTYEDLAPVSSKLTRVTNGCDAVELRVDLLKQHDSHFISNQIGILRNQTSVPILFTIRTKSQGGRFPDDSYEDIERLLNLAIKLGVEYVDLELSLPESLLDSVASKRQFTKIIGSHHDFSGTVKWNNVEWENKYLLALKLNVDIIKFVGTATSLNDNWELEHFRSLHTDKPFIGINMGPLGKVSRVFNTILTPVTHKDLPSSAAPGQLTLKEINEYFGQFGGSSRKKFYIVGKPISHSKSPELHKTFYDEFGLSHTFDKFETDDAAKVFNDLVKGNDELGGCAVTIPLKIDMLKYVNELTDSAKSIGALNTIIPIGDGRFIGDNTDWIGIRDSLHQAGCEIAPESSVGLVVGGGGTSRAAVYALHQMGCSKIYMLNRTPSKLSEIKNHFPSNYNIHIVDSLDAIDEDDKLDAAVSTVPGDKPLDDQLISLLKKLLEKKRGHAVLLEAAYKPRETPIMALAFSRGWKVVPGSKMLVNQGIEQFYKWTGYQFSSHIDL.

A 3-dehydroquinate synthase region spans residues 1–383; sequence MSGLIEKVSI…YEPKASYVND (383 aa). Residues 44-46, 82-85, 113-115, and D118 contribute to the NAD(+) site; these read DSN, EANK, and GGV. 7-phospho-2-dehydro-3-deoxy-D-arabino-heptonate is bound at residue R129. 138–139 is an NAD(+) binding site; the sequence is TS. 7-phospho-2-dehydro-3-deoxy-D-arabino-heptonate contacts are provided by D145 and K151. K160 serves as a coordination point for NAD(+). Residue N161 coordinates 7-phospho-2-dehydro-3-deoxy-D-arabino-heptonate. NAD(+) is bound by residues 178-181 and N189; that span reads FLET. E193 is a binding site for Zn(2+). Residues 193-196 and K249 contribute to the 7-phospho-2-dehydro-3-deoxy-D-arabino-heptonate site; that span reads EVVK. E259 functions as the Proton acceptor; for 3-dehydroquinate synthase activity in the catalytic mechanism. Residues 263–267 and H270 each bind 7-phospho-2-dehydro-3-deoxy-D-arabino-heptonate; that span reads RNLLN. H270 is a Zn(2+) binding site. The active-site Proton acceptor; for 3-dehydroquinate synthase activity is H274. H286 and K355 together coordinate 7-phospho-2-dehydro-3-deoxy-D-arabino-heptonate. H286 provides a ligand contact to Zn(2+). The interval 396 to 840 is EPSP synthase; it reads VKDFNSAPST…WDILHTTFNV (445 aa). Catalysis depends on C822, which acts as the For EPSP synthase activity. The shikimate kinase stretch occupies residues 859–1049; the sequence is DKSIIVIGMR…IPNGRSAFVC (191 aa). An ATP-binding site is contributed by 866 to 873; the sequence is GMRAAGKS. Residues 1050 to 1261 are 3-dehydroquinase; sequence LTYEDLAPVS…AAPGQLTLKE (212 aa). H1166 functions as the Proton acceptor; for 3-dehydroquinate dehydratase activity in the catalytic mechanism. Residue K1195 is the Schiff-base intermediate with substrate; for 3-dehydroquinate dehydratase activity of the active site. Residues 1274–1545 form a shikimate dehydrogenase region; sequence RKKFYIVGKP…GYQFSSHIDL (272 aa).

The protein in the N-terminal section; belongs to the sugar phosphate cyclases superfamily. Dehydroquinate synthase family. This sequence in the 2nd section; belongs to the EPSP synthase family. In the 3rd section; belongs to the shikimate kinase family. It in the 4th section; belongs to the type-I 3-dehydroquinase family. The protein in the C-terminal section; belongs to the shikimate dehydrogenase family. As to quaternary structure, homodimer. Requires Zn(2+) as cofactor.

It localises to the cytoplasm. The enzyme catalyses 7-phospho-2-dehydro-3-deoxy-D-arabino-heptonate = 3-dehydroquinate + phosphate. The catalysed reaction is 3-dehydroquinate = 3-dehydroshikimate + H2O. It carries out the reaction shikimate + NADP(+) = 3-dehydroshikimate + NADPH + H(+). It catalyses the reaction shikimate + ATP = 3-phosphoshikimate + ADP + H(+). The enzyme catalyses 3-phosphoshikimate + phosphoenolpyruvate = 5-O-(1-carboxyvinyl)-3-phosphoshikimate + phosphate. It functions in the pathway metabolic intermediate biosynthesis; chorismate biosynthesis; chorismate from D-erythrose 4-phosphate and phosphoenolpyruvate: step 2/7. It participates in metabolic intermediate biosynthesis; chorismate biosynthesis; chorismate from D-erythrose 4-phosphate and phosphoenolpyruvate: step 3/7. Its pathway is metabolic intermediate biosynthesis; chorismate biosynthesis; chorismate from D-erythrose 4-phosphate and phosphoenolpyruvate: step 4/7. The protein operates within metabolic intermediate biosynthesis; chorismate biosynthesis; chorismate from D-erythrose 4-phosphate and phosphoenolpyruvate: step 5/7. It functions in the pathway metabolic intermediate biosynthesis; chorismate biosynthesis; chorismate from D-erythrose 4-phosphate and phosphoenolpyruvate: step 6/7. The AROM polypeptide catalyzes 5 consecutive enzymatic reactions in prechorismate polyaromatic amino acid biosynthesis. The sequence is that of Pentafunctional AROM polypeptide from Komagataella phaffii (strain GS115 / ATCC 20864) (Yeast).